The chain runs to 420 residues: Bile acid-CoA:amino acid N-acyltransferase (420 aa).

The residue at position 40 (K40) is an N6-succinyllysine. At S125 the chain carries Phosphoserine. Residues C235 and D328 each act as charge relay system in the active site. K346 and K350 each carry N6-succinyllysine. Catalysis depends on H362, which acts as the Charge relay system. K409 carries the N6-succinyllysine modification. Phosphoserine is present on S418.

This sequence belongs to the C/M/P thioester hydrolase family. As to quaternary structure, monomer. As to expression, highly expressed in liver, kidney, gallbladder, proximal intestine and distal intestine. Weakly expressed in adrenal gland, lung, brain and muscle.

It localises to the cytoplasm. Its subcellular location is the cytosol. It is found in the peroxisome. The catalysed reaction is choloyl-CoA + glycine = glycocholate + CoA + H(+). The enzyme catalyses hexadecanoyl-CoA + H2O = hexadecanoate + CoA + H(+). It catalyses the reaction choloyl-CoA + H2O = cholate + CoA + H(+). It carries out the reaction chenodeoxycholoyl-CoA + H2O = chenodeoxycholate + CoA + H(+). The catalysed reaction is eicosanoyl-CoA + H2O = eicosanoate + CoA + H(+). The enzyme catalyses octadecanoyl-CoA + H2O = octadecanoate + CoA + H(+). It catalyses the reaction docosanoyl-CoA + H2O = docosanoate + CoA + H(+). It carries out the reaction tetracosanoyl-CoA + H2O = tetracosanoate + CoA + H(+). The catalysed reaction is hexacosanoyl-CoA + H2O = hexacosanoate + CoA + H(+). The enzyme catalyses dodecanoyl-CoA + H2O = dodecanoate + CoA + H(+). It catalyses the reaction tetradecanoyl-CoA + H2O = tetradecanoate + CoA + H(+). It carries out the reaction choloyl-CoA + taurine = taurocholate + CoA + H(+). The catalysed reaction is chenodeoxycholoyl-CoA + glycine = glycochenodeoxycholate + CoA + H(+). The enzyme catalyses chenodeoxycholoyl-CoA + taurine = taurochenodeoxycholate + CoA + H(+). It catalyses the reaction eicosanoyl-CoA + glycine = N-eicosanoylglycinate + CoA + H(+). It carries out the reaction hexacosanoyl-CoA + glycine = N-hexacosanoylglycine + CoA + H(+). The catalysed reaction is docosanoyl-CoA + glycine = N-docosanoylglycine + CoA + H(+). Catalyzes the amidation of bile acids (BAs) with the amino acid taurine. Selective for taurine conjugation of cholyl CoA and only taurine-conjugated BAs are found in bile. Amidation of BAs in the liver with taurine prior to their excretion into bile is an important biochemical event in bile acid metabolism. This conjugation (or amidation) plays several important biological roles in that it promotes the secretion of BAs and cholesterol into bile and increases the detergent properties of BAs in the intestine, which facilitates lipid and vitamin absorption. May also act as an acyl-CoA thioesterase that regulates intracellular levels of free fatty acids. In vitro, catalyzes the hydrolysis of long- and very long-chain saturated acyl-CoAs to the free fatty acid and coenzyme A (CoASH), and conjugates glycine to these acyl-CoAs. This is Bile acid-CoA:amino acid N-acyltransferase (Baat) from Mus musculus (Mouse).